The following is a 525-amino-acid chain: G patch domain-containing protein 3 (525 aa).

Positions 264–316 are disordered; that stretch reads YLADIPASPCGEPEEEVGKEEEEESHSDEDDDRGEEWERHEALHEDVTGQERT. Residues 275–298 show a composition bias toward acidic residues; that stretch reads EPEEEVGKEEEEESHSDEDDDRGE. Residues 299–316 are compositionally biased toward basic and acidic residues; it reads EWERHEALHEDVTGQERT. Residues 410–458 form the G-patch domain; sequence TKGIGRKVMERQGWAEGQGLGCRCSGVPEALDSDGQHPRCKRGLGYHGE.

In terms of assembly, interacts with mitochondrial MAVS; the interaction is markedly increased upon viral infection. Expressed in ocular tissues including retinal pigment epithelium, cornea, ciliary muscle and non-pigmented ciliary epithelium. Also expressed in optic nerve, cartilage, skin and lymph node.

The protein resides in the nucleus. It is found in the cytoplasm. Its function is as follows. Involved in transcriptional regulation. It is able to activate transcription from the CXCR4 promoter and therefore it might control neural crest cell migration involved in ocular and craniofacial development. Is a negative regulator of immune antiviral response, acting via down-regulation of RIG-I-like receptors signaling and inhibition of type I interferon production. The control mechanism involves interaction with mitochondrial MAVS and inhibition of MAVS assembly with downstream proteins implicated in antiviral response, such as TBK1 and TRAF6. The polypeptide is G patch domain-containing protein 3 (GPATCH3) (Homo sapiens (Human)).